Consider the following 143-residue polypeptide: Protein SLC31A2 (143 aa).

Residues 1 to 22 (MAMHFIFSDTAVLLFDFWSVHS) are Extracellular-facing. The chain crosses the membrane as a helical span at residues 23–43 (PAGMALSVLVLLLLAVLYEGI). Over 44–93 (KVGKAKLLNQVLVNLPTSISQQTIAETDGDSAGSDSFPVGRTHHRWYLCH) the chain is Cytoplasmic. A Phosphoserine modification is found at Ser-77. The helical transmembrane segment at 94 to 114 (FGQSLIHVIQVVIGYFIMLAV) threads the bilayer. Residues 115–119 (MSYNT) are Extracellular-facing. Residues 120-140 (WIFLGVVLGSAVGYYLAYPLL) traverse the membrane as a helical segment. Topologically, residues 141–143 (STA) are cytoplasmic.

The protein belongs to the copper transporter (Ctr) (TC 1.A.56) family. SLC31A subfamily. In terms of assembly, oligomer. Interacts with SLC31A1; this interaction stabilizes SLC31A2 and protects it from ubiquitination and the subsequent degradation. Post-translationally, ubiquitinated; ubiquitination and the subsequent proteasomal degradation are prevent by SLC31A1 that stabilizes it. As to expression, ubiquitous with high expression in placenta and heart.

It localises to the membrane. The protein resides in the cytoplasmic vesicle membrane. The protein localises to the late endosome membrane. It is found in the lysosome membrane. In terms of biological role, does not function as a copper(1+) importer in vivo. However, in vitro functions as a low-affinity copper(1+) importer. Regulator of SLC31A1 which facilitates the cleavage of the SLC31A1 ecto-domain or which stabilizes the truncated form of SLC31A1 (Truncated CTR1 form), thereby drives the SLC31A1 truncated form-dependent endosomal copper export and modulates the copper and cisplatin accumulation via SLC31A1. The sequence is that of Protein SLC31A2 from Homo sapiens (Human).